We begin with the raw amino-acid sequence, 298 residues long: Zinc finger protein-like 1 homolog (298 aa).

A B box-type; degenerate zinc finger spans residues 1-43 (MGLCKCPKRLVTNQFCFEHRVNVCEHCMVQSHPKCIVQSYLQW). The RING-type; atypical zinc finger occupies 53 to 101 (CTLCGTTLEQGDCVRLVCYHVFHWDCLNARQAALPANTAPRGHQCPACT). The disordered stretch occupies residues 199-230 (AGDYASSRRPLLPRQSPIGGTDRDDNKYQRRT). A Phosphoserine modification is found at serine 214. A helical transmembrane segment spans residues 255–275 (WFLVTAGILAFVLFVYLMAWL).

Belongs to the ZFPL1 family.

It localises to the membrane. This Drosophila erecta (Fruit fly) protein is Zinc finger protein-like 1 homolog.